The primary structure comprises 213 residues: Histone H1.2 (213 aa).

Residues 1–17 (MSETAPAAPAAAPPAEK) show a composition bias toward low complexity. Residues 1–41 (MSETAPAAPAAAPPAEKTPVKKKAAKKPAGARRKASGPPVS) form a disordered region. S2 bears the N-acetylserine; partial mark. S2 carries the post-translational modification Phosphoserine. K17 carries the N6-acetyllysine modification. Basic residues predominate over residues 20–35 (VKKKAAKKPAGARRKA). N6-(2-hydroxyisobutyryl)lysine is present on residues K23, K26, and K27. Position 34 is an N6-(beta-hydroxybutyryl)lysine; alternate (K34). The residue at position 34 (K34) is an N6-crotonyllysine; alternate. The residue at position 34 (K34) is an N6-methyllysine; alternate. In terms of domain architecture, H15 spans 36 to 109 (SGPPVSELIT…GASGSFKLNK (74 aa)). K46 carries the post-translational modification N6-(2-hydroxyisobutyryl)lysine. The residue at position 52 (K52) is an N6-(beta-hydroxybutyryl)lysine; alternate. K52 carries the post-translational modification N6-(2-hydroxyisobutyryl)lysine; alternate. R54 is modified (citrulline). K63 carries the post-translational modification N6-(2-hydroxyisobutyryl)lysine. K64 carries the post-translational modification N6-(beta-hydroxybutyryl)lysine; alternate. K64 is subject to N6-crotonyllysine; alternate. K64 carries the post-translational modification N6-(2-hydroxyisobutyryl)lysine; alternate. N6-(2-hydroxyisobutyryl)lysine is present on residues K75 and K81. K85 and K90 each carry N6-(beta-hydroxybutyryl)lysine; alternate. N6-crotonyllysine; alternate is present on residues K85, K90, and K97. N6-(2-hydroxyisobutyryl)lysine; alternate occurs at positions 85, 90, and 97. The disordered stretch occupies residues 95-213 (QTKGTGASGS…KPKKAAPKKK (119 aa)). K97 carries the post-translational modification N6-succinyllysine; alternate. A Phosphoserine; by PKC modification is found at S104. K106 is subject to N6-(beta-hydroxybutyryl)lysine. N6-(2-hydroxyisobutyryl)lysine is present on residues K110, K117, K121, K129, and K136. Residues 119–140 (KAKKAGAAKPKKAAGAAKKTKK) are compositionally biased toward basic residues. T146 is modified (phosphothreonine). K148 bears the N6-(2-hydroxyisobutyryl)lysine mark. A compositionally biased stretch (basic residues) spans 149 to 160 (KTAKKTPKKAKK). N6-crotonyllysine; alternate occurs at positions 159 and 168. 2 positions are modified to N6-(2-hydroxyisobutyryl)lysine; alternate: K159 and K168. Basic residues predominate over residues 169 to 186 (KVAKSPKKAKAAKPKKAA). Residue K187 is modified to N6-methyllysine; by EHMT1 and EHMT2. S188 is modified (ADP-ribosylserine). Residues 193–213 (VKPKAAKPKVAKPKKAAPKKK) show a composition bias toward basic residues.

It belongs to the histone H1/H5 family. In terms of processing, H1 histones are progressively phosphorylated during the cell cycle, becoming maximally phosphorylated during late G2 phase and M phase, and being dephosphorylated sharply thereafter. Post-translationally, crotonylation (Kcr) is specifically present in male germ cells and marks testis-specific genes in post-meiotic cells, including X-linked genes that escape sex chromosome inactivation in haploid cells. Crotonylation marks active promoters and enhancers and confers resistance to transcriptional repressors. It is also associated with post-meiotically activated genes on autosomes. ADP-ribosylated on Ser-188 in response to DNA damage. In terms of processing, citrullination at Arg-54 (H1R54ci) by PADI4 takes place within the DNA-binding site of H1 and results in its displacement from chromatin and global chromatin decondensation, thereby promoting pluripotency and stem cell maintenance.

The protein resides in the nucleus. It localises to the chromosome. In terms of biological role, histone H1 protein binds to linker DNA between nucleosomes forming the macromolecular structure known as the chromatin fiber. Histones H1 are necessary for the condensation of nucleosome chains into higher-order structured fibers. Also acts as a regulator of individual gene transcription through chromatin remodeling, nucleosome spacing and DNA methylation. The polypeptide is Histone H1.2 (Bos taurus (Bovine)).